The sequence spans 187 residues: Ribonuclease HII (187 aa).

The 187-residue stretch at 1–187 (MIILGIDEAG…YKPVQVLLNE (187 aa)) folds into the RNase H type-2 domain. The a divalent metal cation site is built by Asp-7, Glu-8, and Asp-99.

Belongs to the RNase HII family. Mn(2+) serves as cofactor. Mg(2+) is required as a cofactor.

Its subcellular location is the cytoplasm. The enzyme catalyses Endonucleolytic cleavage to 5'-phosphomonoester.. Endonuclease that specifically degrades the RNA of RNA-DNA hybrids. This is Ribonuclease HII from Francisella tularensis subsp. tularensis (strain FSC 198).